The primary structure comprises 892 residues: DNA mismatch repair protein MutS (892 aa).

The disordered stretch occupies residues 663 to 684 (TNTSLREAAPTTTLSTSDQGQM). 696 to 703 (GPNASGKS) contacts ATP.

Belongs to the DNA mismatch repair MutS family.

This protein is involved in the repair of mismatches in DNA. It is possible that it carries out the mismatch recognition step. This protein has a weak ATPase activity. In Nostoc punctiforme (strain ATCC 29133 / PCC 73102), this protein is DNA mismatch repair protein MutS.